A 589-amino-acid chain; its full sequence is Phenylalanine--tRNA ligase beta subunit (589 aa).

A B5 domain is found at 302 to 379 (LPYRKEMVRA…IAYGYNNIQM (78 aa)). Residues D357, D363, E366, and D367 each coordinate Mg(2+).

This sequence belongs to the phenylalanyl-tRNA synthetase beta subunit family. Type 2 subfamily. As to quaternary structure, heterotetramer; dimer of two heterodimers formed by FARSA and FARSB. Mg(2+) serves as cofactor.

It is found in the cytoplasm. The catalysed reaction is tRNA(Phe) + L-phenylalanine + ATP = L-phenylalanyl-tRNA(Phe) + AMP + diphosphate + H(+). The chain is Phenylalanine--tRNA ligase beta subunit (Farsb) from Mus musculus (Mouse).